The following is a 65-amino-acid chain: LTCVKSNSIWFPTSEDCPPGQNLCFKRWQYISPRMYDFTRGCAATCPKAEYRDVINCCGTDKCNK.

Cystine bridges form between Cys3/Cys24, Cys17/Cys42, Cys46/Cys57, and Cys58/Cys63.

Belongs to the three-finger toxin family. Short-chain subfamily. Aminergic toxin sub-subfamily. As to quaternary structure, monomer. In terms of tissue distribution, expressed by the venom gland.

The protein localises to the secreted. Functionally, binds irreversibly and specifically to M1 (CHRM1) muscarinic acetylcholine receptors, blocking further binding of antagonists and preventing the action of agonists. The chain is Muscarinic m1-toxin2 from Dendroaspis angusticeps (Eastern green mamba).